Consider the following 164-residue polypeptide: UPF0114 protein KPK_0696 (164 aa).

The next 4 helical transmembrane spans lie at 15-35 (LLAP…IKFF), 53-73 (LILT…LVMV), 109-126 (VAAS…RVFM), and 136-156 (LMWY…MGYL).

It belongs to the UPF0114 family.

The protein localises to the cell membrane. The polypeptide is UPF0114 protein KPK_0696 (Klebsiella pneumoniae (strain 342)).